We begin with the raw amino-acid sequence, 537 residues long: Fucosyltransferase 6 (537 aa).

Residues 1-20 lie on the Cytoplasmic side of the membrane; that stretch reads MYHIFQISSEVFRAFGLKMK. The helical; Signal-anchor for type II membrane protein transmembrane segment at 21–41 threads the bilayer; it reads ILLTLVFSGLLIWSVVLVSFS. The Lumenal segment spans residues 42–537; sequence NDFNNQLLVA…NDGLKLFDEL (496 aa). Residues Asn54, Asn231, and Asn378 are each glycosylated (N-linked (GlcNAc...) asparagine).

The protein belongs to the glycosyltransferase 37 family. Expressed in roots and flowers.

The protein resides in the golgi apparatus. It is found in the golgi stack membrane. The protein operates within protein modification; protein glycosylation. In terms of biological role, may be involved in cell wall biosynthesis. May act as a fucosyltransferase. The protein is Fucosyltransferase 6 (FUT6) of Arabidopsis thaliana (Mouse-ear cress).